A 556-amino-acid polypeptide reads, in one-letter code: 2,3-bisphosphoglycerate-independent phosphoglycerate mutase (556 aa).

Residues Asp-25 and Ser-78 each coordinate Mn(2+). Ser-78 functions as the Phosphoserine intermediate in the catalytic mechanism. Residues His-137, 167-168 (RD), Arg-203, Arg-210, 283-286 (RADR), and Lys-358 contribute to the substrate site. Mn(2+) is bound by residues Asp-427, His-431, Asp-468, His-469, and His-498.

This sequence belongs to the BPG-independent phosphoglycerate mutase family. As to quaternary structure, monomer. Requires Mn(2+) as cofactor. Found ubiquitously in germinating seed.

It localises to the cytoplasm. The catalysed reaction is (2R)-2-phosphoglycerate = (2R)-3-phosphoglycerate. It functions in the pathway carbohydrate degradation; glycolysis; pyruvate from D-glyceraldehyde 3-phosphate: step 3/5. Catalyzes the interconversion of 2-phosphoglycerate and 3-phosphoglycerate. This chain is 2,3-bisphosphoglycerate-independent phosphoglycerate mutase, found in Ricinus communis (Castor bean).